Reading from the N-terminus, the 73-residue chain is Translation initiation factor IF-1 (73 aa).

Residues 1–72 (MAKEDVIEVE…TKGRITYRFI (72 aa)) form the S1-like domain.

This sequence belongs to the IF-1 family. Component of the 30S ribosomal translation pre-initiation complex which assembles on the 30S ribosome in the order IF-2 and IF-3, IF-1 and N-formylmethionyl-tRNA(fMet); mRNA recruitment can occur at any time during PIC assembly.

Its subcellular location is the cytoplasm. One of the essential components for the initiation of protein synthesis. Stabilizes the binding of IF-2 and IF-3 on the 30S subunit to which N-formylmethionyl-tRNA(fMet) subsequently binds. Helps modulate mRNA selection, yielding the 30S pre-initiation complex (PIC). Upon addition of the 50S ribosomal subunit IF-1, IF-2 and IF-3 are released leaving the mature 70S translation initiation complex. In Lactobacillus johnsonii (strain CNCM I-12250 / La1 / NCC 533), this protein is Translation initiation factor IF-1.